Here is a 69-residue protein sequence, read N- to C-terminus: DNA gyrase inhibitor YacG (69 aa).

4 residues coordinate Zn(2+): Cys-12, Cys-15, Cys-31, and Cys-35. The interval 49 to 69 (RVPVEPKPDEGETPDQAERPQ) is disordered.

Belongs to the DNA gyrase inhibitor YacG family. As to quaternary structure, interacts with GyrB. The cofactor is Zn(2+).

In terms of biological role, inhibits all the catalytic activities of DNA gyrase by preventing its interaction with DNA. Acts by binding directly to the C-terminal domain of GyrB, which probably disrupts DNA binding by the gyrase. This chain is DNA gyrase inhibitor YacG, found in Thiobacillus denitrificans (strain ATCC 25259 / T1).